A 182-amino-acid polypeptide reads, in one-letter code: Dynactin subunit 5 (182 aa).

Met1 carries the post-translational modification N-acetylmethionine.

This sequence belongs to the dynactin subunits 5/6 family. Dynactin subunit 5 subfamily. In terms of assembly, subunit of dynactin, a multiprotein complex part of a tripartite complex with dynein and a adapter, such as BICDL1, BICD2 or HOOK3. The dynactin complex is built around ACTR1A/ACTB filament and consists of an actin-related filament composed of a shoulder domain, a pointed end and a barbed end. Its length is defined by its flexible shoulder domain. The soulder is composed of 2 DCTN1 subunits, 4 DCTN2 and 2 DCTN3. The 4 DCNT2 (via N-terminus) bind the ACTR1A filament and act as molecular rulers to determine the length. The pointed end is important for binding dynein-dynactin cargo adapters. Consists of 4 subunits: ACTR10, DCNT4, DCTN5 and DCTN6. Within the complex DCTN6 forms a heterodimer with DCTN5. The barbed end is composed of a CAPZA1:CAPZB heterodimers, which binds ACTR1A/ACTB filament and dynactin and stabilizes dynactin. Interacts with N4BP2L1.

The protein resides in the cytoplasm. It localises to the cytoskeleton. Its subcellular location is the chromosome. It is found in the centromere. The protein localises to the kinetochore. Functionally, part of the dynactin complex that activates the molecular motor dynein for ultra-processive transport along microtubules. This is Dynactin subunit 5 from Homo sapiens (Human).